The chain runs to 337 residues: Pyridoxal 5'-phosphate synthase subunit PdxS (337 aa).

Asp-63 contacts D-ribose 5-phosphate. The active-site Schiff-base intermediate with D-ribose 5-phosphate is Lys-120. A D-ribose 5-phosphate-binding site is contributed by Gly-192. D-glyceraldehyde 3-phosphate is bound at residue Lys-204. D-ribose 5-phosphate is bound by residues Gly-253 and 274–275 (GS).

The protein belongs to the PdxS/SNZ family. In terms of assembly, in the presence of PdxT, forms a dodecamer of heterodimers.

It catalyses the reaction aldehydo-D-ribose 5-phosphate + D-glyceraldehyde 3-phosphate + L-glutamine = pyridoxal 5'-phosphate + L-glutamate + phosphate + 3 H2O + H(+). It participates in cofactor biosynthesis; pyridoxal 5'-phosphate biosynthesis. Catalyzes the formation of pyridoxal 5'-phosphate from ribose 5-phosphate (RBP), glyceraldehyde 3-phosphate (G3P) and ammonia. The ammonia is provided by the PdxT subunit. Can also use ribulose 5-phosphate and dihydroxyacetone phosphate as substrates, resulting from enzyme-catalyzed isomerization of RBP and G3P, respectively. In Aeropyrum pernix (strain ATCC 700893 / DSM 11879 / JCM 9820 / NBRC 100138 / K1), this protein is Pyridoxal 5'-phosphate synthase subunit PdxS.